Here is a 341-residue protein sequence, read N- to C-terminus: Ribosomal RNA small subunit methyltransferase C (341 aa).

Belongs to the methyltransferase superfamily. RsmC family. As to quaternary structure, monomer.

It is found in the cytoplasm. It catalyses the reaction guanosine(1207) in 16S rRNA + S-adenosyl-L-methionine = N(2)-methylguanosine(1207) in 16S rRNA + S-adenosyl-L-homocysteine + H(+). In terms of biological role, specifically methylates the guanine in position 1207 of 16S rRNA in the 30S particle. The sequence is that of Ribosomal RNA small subunit methyltransferase C from Shewanella pealeana (strain ATCC 700345 / ANG-SQ1).